A 514-amino-acid chain; its full sequence is Multifunctional alkaline phosphatase superfamily protein PehA (514 aa).

Aspartate 12, cysteine 57, aspartate 324, and histidine 325 together coordinate Mn(2+). Cysteine 57 (nucleophile) is an active-site residue. Residue cysteine 57 is modified to 3-oxoalanine (Cys).

This sequence belongs to the alkaline phosphatase superfamily. As to quaternary structure, homotetramer. Mn(2+) serves as cofactor. In terms of processing, the conversion to 3-oxoalanine (also known as C-formylglycine, FGly), of a serine or cysteine residue in prokaryotes and of a cysteine residue in eukaryotes, is critical for catalytic activity. Phosphate triester hydrolytic activity is retained with unmodified cysteine acting as a nucleophile.

Its activity is regulated as follows. Anions including Cl(-) and CH3COO(-), and SO4(2-) salts stimulate activity 20-40% at 100 mM. Functionally, hydrolytic enzyme with a broad substrate specificity acting on phosphate diesters and phosphonate monoesters. Hydrolyzes phosphate mono- and triesters, sulfate monoesters and sulfonate monoesters. Hydrolyzes glyphosate monoesters. Does not hydrolyze DNA or cGMP. Hydrolyzes glyceryl glyphosate, but this substrate has a much lower affinity than the glyphosate monoesters. The sequence is that of Multifunctional alkaline phosphatase superfamily protein PehA from Trinickia caryophylli (Paraburkholderia caryophylli).